The primary structure comprises 660 residues: MFDYLENEEVVLDELKQMLRDRDPNDTRNQFKNNALHAYLFNEHCNNVEVVKLLLDSGTNPLHKNWRQFTPIEEYTNSRHVKVNKDIAMALLEATGYSNINDFNIFSYMKSKNVDVDLIKVLVEHGFDLSVKCENHRSVIENYVMTDDPVPEIIDLFIENGCSVLYEDDEYGYVYDDYQPRNCGTVLHLYIIAHLYSESDTRAYVRPEVVKCLINHGIKPSSIDKNYCTALQYYIKSSHIDIDIVKLLMKGIDNTAYSYIDDLTCCTRGIMADYLNSDYRYNKDVDLDLVKLFLENGKPYGIMCSIVPLWRNDKETISLILKTMNSDVLQHILIEYMTFGDIDIPLVECMLEYGAVVNKEAIHRYFRNINIDSYTMKYLLKKEGGDAVNHLDDGEIPIGHLCESNYGCYNFYTYTYKKGLCDMSYVCPILSTINICLPYLKDINMIDKRGETLLHKAVRYNKQSLVSLLLESGSDVNIRSNNGYTCITIAINESRNIELLKMLLCHKPTLDCVIDSLSEVSNIVDNAYAIKQCIKYTMIIDDCTSSKIPESISQRYNDYIDLCNQELNEMKKIMVGGNTMFSLIFTEHGAKIIHRYANNPELRAYYESKQNKIYVEAYDIISDAIVKHNKIHKTIIKSVDDNTYISNLPYTIKYKIFEQQ.

9 ANK repeats span residues 31–64, 101–131, 135–166, 190–222, 226–257, 268–302, 325–359, 449–478, and 482–512; these read FKNNALHAYLFNEHCNNVEVVKLLLDSGTNPLHK, NDFNIFSYMKSKNVDVDLIKVLVEHGFDLSV, NHRSVIENYVMTDDPVPEIIDLFIENGCSVLY, YIIAHLYSESDTRAYVRPEVVKCLINHGIKPSS, NYCTALQYYIKSSHIDIDIVKLLMKGIDNTAY, RGIMADYLNSDYRYNKDVDLDLVKLFLENGKPYGI, NSDVLQHILIEYMTFGDIDIPLVECMLEYGAVVNK, RGETLLHKAVRYNKQSLVSLLLESGSDVNI, and NGYTCITIAINESRNIELLKMLLCHKPTLDC. Positions 578-658 are PRANC/F-box-like; sequence NTMFSLIFTE…PYTIKYKIFE (81 aa).

The protein belongs to the orthopoxvirus OPG023 family. In terms of assembly, interacts (via N-terminus) with host RELA. Interacts (via PRANC/F-box-like domain) with the SKP1 component of the host SCF ubiquitin ligase complex.

Its function is as follows. Substrate-specific adapter of SKP1-containing E3 ubiquitin-protein ligases which mediate the ubiquitination and subsequent proteasomal degradation of host target proteins. Prevents activation and subsequent nuclear localization of NF-kappa-B in infected cells, by targeting NF-kappa-B RELA subunit to the SCF E3 ligase complex. The chain is Ankyrin repeat domain-containing protein OPG023 (OPG023) from Cynomys gunnisoni (Gunnison's prairie dog).